Here is a 356-residue protein sequence, read N- to C-terminus: NADH-quinone oxidoreductase subunit H (356 aa).

9 consecutive transmembrane segments (helical) span residues 22 to 42 (GVVSIKVIALIICLLLATAYL), 59 to 79 (PSLAGPFGLLQPIADAIKLVF), 93 to 113 (FIIAPIITFVLSLLGWSVIPI), 124 to 144 (IGGILFILAVTSLGVYGIIIA), 171 to 191 (MALSIVAVLIVTGEMDLIQIV), 198 to 218 (PIWLTIMMLPLAVIYFISILA), 240 to 260 (VEYSSMAFAMFFLGEYANMIL), 285 to 305 (IPGYIWFILKVSMVLFCFLWI), and 321 to 341 (GLKVFLPIVLAWIIVVSTILV).

The protein belongs to the complex I subunit 1 family. As to quaternary structure, NDH-1 is composed of 14 different subunits. Subunits NuoA, H, J, K, L, M, N constitute the membrane sector of the complex.

The protein resides in the cell inner membrane. It carries out the reaction a quinone + NADH + 5 H(+)(in) = a quinol + NAD(+) + 4 H(+)(out). Its function is as follows. NDH-1 shuttles electrons from NADH, via FMN and iron-sulfur (Fe-S) centers, to quinones in the respiratory chain. The immediate electron acceptor for the enzyme in this species is believed to be ubiquinone. Couples the redox reaction to proton translocation (for every two electrons transferred, four hydrogen ions are translocated across the cytoplasmic membrane), and thus conserves the redox energy in a proton gradient. This subunit may bind ubiquinone. The chain is NADH-quinone oxidoreductase subunit H from Orientia tsutsugamushi (strain Boryong) (Rickettsia tsutsugamushi).